A 567-amino-acid chain; its full sequence is Delta(24)-sterol reductase (567 aa).

Residues 1-24 lie on the Lumenal side of the membrane; that stretch reads MSDLEAPLRPKRKKIWVDYFVKFR. A helical; Signal-anchor membrane pass occupies residues 25–45; sequence WILVIFVVLPISFTLYFLTYL. In terms of domain architecture, FAD-binding PCMH-type spans 45–231; sequence LGDVRSEWKS…VAAEVKLIPI (187 aa). Topologically, residues 46–567 are cytoplasmic; the sequence is GDVRSEWKSF…AYPEVDQPPD (522 aa). An interaction with calmodulin region spans residues 520–541; that stretch reads CRRKYGAVGTFMSVYYKCKKGR. Residues 548 to 567 form a disordered region; the sequence is REAEQAHLDTAYPEVDQPPD.

The protein belongs to the DIMINUTO family. Highly expressed in the apical region and root tips and lower levels in immature and mature internodes and leaves.

It localises to the membrane. It carries out the reaction lathosterol + NADP(+) = 5alpha-cholesta-7,24-dien-3beta-ol + NADPH + H(+). Functionally, plays a critical role in the general process of plant cell elongation. The chain is Delta(24)-sterol reductase (DIM) from Pisum sativum (Garden pea).